A 78-amino-acid polypeptide reads, in one-letter code: RNA-binding protein Hfq (78 aa).

A Sm domain is found at 10–69; the sequence is DPFLNTLRKEHVPVSIYLVNGIKLQGQIESFDQYVVLLRNTVTQMVYKHAISTVVPARAV.

The protein belongs to the Hfq family. As to quaternary structure, homohexamer.

Its function is as follows. RNA chaperone that binds small regulatory RNA (sRNAs) and mRNAs to facilitate mRNA translational regulation in response to envelope stress, environmental stress and changes in metabolite concentrations. Also binds with high specificity to tRNAs. The chain is RNA-binding protein Hfq from Bordetella avium (strain 197N).